The chain runs to 244 residues: Small ribosomal subunit protein uS3 (244 aa).

Residues 39–110 (IRNFIQKKYS…QVRINVVEVE (72 aa)) enclose the KH type-2 domain. Residues 221-244 (GAIPRRKGSRKPQQFEDRSSNENS) form a disordered region. Over residues 233 to 244 (QQFEDRSSNENS) the composition is skewed to basic and acidic residues.

It belongs to the universal ribosomal protein uS3 family. Part of the 30S ribosomal subunit. Forms a tight complex with proteins S10 and S14.

Its function is as follows. Binds the lower part of the 30S subunit head. Binds mRNA in the 70S ribosome, positioning it for translation. This Prochlorococcus marinus (strain MIT 9515) protein is Small ribosomal subunit protein uS3.